Consider the following 233-residue polypeptide: Large ribosomal subunit protein uL1 (233 aa).

The protein belongs to the universal ribosomal protein uL1 family. Part of the 50S ribosomal subunit.

Its function is as follows. Binds directly to 23S rRNA. The L1 stalk is quite mobile in the ribosome, and is involved in E site tRNA release. Protein L1 is also a translational repressor protein, it controls the translation of the L11 operon by binding to its mRNA. The protein is Large ribosomal subunit protein uL1 of Campylobacter curvus (strain 525.92).